We begin with the raw amino-acid sequence, 396 residues long: Aspartate aminotransferase (396 aa).

The L-aspartate site is built by G34, W130, and N183. K246 carries the post-translational modification N6-(pyridoxal phosphate)lysine. Position 374 (R374) interacts with L-aspartate.

Belongs to the class-I pyridoxal-phosphate-dependent aminotransferase family. Homodimer. It depends on pyridoxal 5'-phosphate as a cofactor.

The protein resides in the cytoplasm. It catalyses the reaction L-aspartate + 2-oxoglutarate = oxaloacetate + L-glutamate. This Salmonella typhi protein is Aspartate aminotransferase (aspC).